The chain runs to 275 residues: N-(5'-phosphoribosyl)anthranilate isomerase 2, chloroplastic (275 aa).

A chloroplast-targeting transit peptide spans 1 to 32 (MSTGISTDLHVHFGALNFSKTYKSGLSNRTVS).

This sequence belongs to the TrpF family. Expressed in roots and shoots.

Its subcellular location is the plastid. It localises to the chloroplast. It catalyses the reaction N-(5-phospho-beta-D-ribosyl)anthranilate = 1-(2-carboxyphenylamino)-1-deoxy-D-ribulose 5-phosphate. Its pathway is amino-acid biosynthesis; L-tryptophan biosynthesis; L-tryptophan from chorismate: step 3/5. This is N-(5'-phosphoribosyl)anthranilate isomerase 2, chloroplastic (PAI2) from Arabidopsis thaliana (Mouse-ear cress).